We begin with the raw amino-acid sequence, 196 residues long: DnaA initiator-associating protein DiaA (196 aa).

The 163-residue stretch at 34–196 (LVHSLLNGNK…DNTLFPHQDD (163 aa)) folds into the SIS domain.

Belongs to the SIS family. DiaA subfamily. As to quaternary structure, homotetramer; dimer of dimers.

Required for the timely initiation of chromosomal replication via direct interactions with the DnaA initiator protein. The polypeptide is DnaA initiator-associating protein DiaA (Salmonella enteritidis PT4 (strain P125109)).